We begin with the raw amino-acid sequence, 117 residues long: Large ribosomal subunit protein bL19 (117 aa).

Belongs to the bacterial ribosomal protein bL19 family.

This protein is located at the 30S-50S ribosomal subunit interface and may play a role in the structure and function of the aminoacyl-tRNA binding site. This chain is Large ribosomal subunit protein bL19, found in Kineococcus radiotolerans (strain ATCC BAA-149 / DSM 14245 / SRS30216).